A 632-amino-acid polypeptide reads, in one-letter code: Chaperone protein HtpG (632 aa).

The a; substrate-binding stretch occupies residues 1 to 345 (MTTAAHAETL…SKDLSLNVSR (345 aa)). The tract at residues 346–561 (ELLQKDPQVD…EHDMGYQMRR (216 aa)) is b. Positions 562 to 632 (LMEAAGQPLP…VQRLNKLLSH (71 aa)) are c.

This sequence belongs to the heat shock protein 90 family. Homodimer.

It is found in the cytoplasm. Its function is as follows. Molecular chaperone. Has ATPase activity. The chain is Chaperone protein HtpG from Chromohalobacter salexigens (strain ATCC BAA-138 / DSM 3043 / CIP 106854 / NCIMB 13768 / 1H11).